The primary structure comprises 321 residues: Quinol oxidase subunit 2 (321 aa).

An N-terminal signal peptide occupies residues 1-25; that stretch reads MIFLFRALKPLLVLALLTVVFVLGG. A lipid anchor (N-palmitoyl cysteine) is attached at cysteine 26. The S-diacylglycerol cysteine moiety is linked to residue cysteine 26. A run of 2 helical transmembrane segments spans residues 49 to 69 and 90 to 110; these read SIGFMLFIVGVVFVLFTIILV and TFLEVVWTVIPILIVIALSVP. The tract at residues 294-321 is disordered; the sequence is QAVSPHSKTDPFENVKKNEFKKSDDTEE. A compositionally biased stretch (basic and acidic residues) spans 300-321; the sequence is SKTDPFENVKKNEFKKSDDTEE.

The protein belongs to the cytochrome c oxidase subunit 2 family. In terms of assembly, interacts with FloT.

The protein localises to the cell membrane. It is found in the membrane raft. The catalysed reaction is 2 a quinol + O2 = 2 a quinone + 2 H2O. In terms of biological role, catalyzes quinol oxidation with the concomitant reduction of oxygen to water. Major component for energy conversion during vegetative growth. Subunit II transfers the electrons from a quinol to the binuclear center of the catalytic subunit I. This Bacillus subtilis (strain 168) protein is Quinol oxidase subunit 2 (qoxA).